Reading from the N-terminus, the 100-residue chain is Small ribosomal subunit protein uS14c (100 aa).

It belongs to the universal ribosomal protein uS14 family. In terms of assembly, part of the 30S ribosomal subunit.

The protein resides in the plastid. It is found in the chloroplast. Functionally, binds 16S rRNA, required for the assembly of 30S particles. This Staurastrum punctulatum (Green alga) protein is Small ribosomal subunit protein uS14c.